The chain runs to 411 residues: Adenylosuccinate synthetase (411 aa).

GTP contacts are provided by residues 11 to 17 (GDEGKGK) and 39 to 41 (GHT). The active-site Proton acceptor is the Asp-12. 2 residues coordinate Mg(2+): Asp-12 and Gly-39. Residues 12–15 (DEGK), 37–40 (NAGH), Thr-121, Arg-135, Gln-215, Thr-230, and Arg-294 contribute to the IMP site. His-40 serves as the catalytic Proton donor. 290-296 (TTTKRPR) lines the substrate pocket. Residues Arg-296, 322 to 324 (KLD), and 400 to 402 (STS) each bind GTP.

The protein belongs to the adenylosuccinate synthetase family. In terms of assembly, homodimer. Mg(2+) is required as a cofactor.

The protein localises to the cytoplasm. The enzyme catalyses IMP + L-aspartate + GTP = N(6)-(1,2-dicarboxyethyl)-AMP + GDP + phosphate + 2 H(+). The protein operates within purine metabolism; AMP biosynthesis via de novo pathway; AMP from IMP: step 1/2. Functionally, plays an important role in the de novo pathway of purine nucleotide biosynthesis. Catalyzes the first committed step in the biosynthesis of AMP from IMP. The chain is Adenylosuccinate synthetase from Helicobacter pylori (strain ATCC 700392 / 26695) (Campylobacter pylori).